The following is an 882-amino-acid chain: Probable LRR receptor-like serine/threonine-protein kinase At1g12460 (882 aa).

Residues 1–21 (MRKVHLFLVLVHFIYISTSRS) form the signal peptide. At 22 to 515 (DSISERDILL…SRNSDALSIS (494 aa)) the chain is on the extracellular side. N-linked (GlcNAc...) asparagine glycosylation occurs at N76. 16 LRR repeats span residues 92–113 (FIRV…DYFK), 116–138 (TLWT…ISEL), 140–162 (SLRF…LFKF), 165–187 (KTKF…IVNC), 189–210 (NLVG…RICD), 213–235 (VLEY…IQKC), 237–258 (RLIL…AVLT), 261–283 (NITY…VDCS), 285–308 (SLEF…MGCK), 309–331 (SLKL…IGKM), 333–355 (SLSV…IGSL), 357–379 (FLQV…ISNC), 381–404 (VLLE…LNLT), 405–427 (NIKI…LGNL), 429–451 (KVQF…LGSL), and 453–475 (TLTH…PMIQ). N-linked (GlcNAc...) asparagine glycosylation occurs at N121. N-linked (GlcNAc...) asparagine glycosylation is found at N261 and N266. N-linked (GlcNAc...) asparagine glycosylation is found at N321 and N341. N-linked (GlcNAc...) asparagine glycans are attached at residues N402, N417, and N426. N-linked (GlcNAc...) asparagine glycans are attached at residues N458 and N463. Residues 516-536 (VIIVIIAAAVILFGVCIVLAL) form a helical membrane-spanning segment. Residues 537-882 (NLRARKRRKD…LESIRNGFGS (346 aa)) lie on the Cytoplasmic side of the membrane. Residue T589 is modified to Phosphothreonine. A Protein kinase domain is found at 593-876 (LDKENIIGMG…AEVVQVLESI (284 aa)). ATP-binding positions include 599–607 (IGMGSIGSV) and K621. Y770 bears the Phosphotyrosine mark.

This sequence belongs to the protein kinase superfamily. Ser/Thr protein kinase family.

Its subcellular location is the cell membrane. The enzyme catalyses L-seryl-[protein] + ATP = O-phospho-L-seryl-[protein] + ADP + H(+). The catalysed reaction is L-threonyl-[protein] + ATP = O-phospho-L-threonyl-[protein] + ADP + H(+). This is Probable LRR receptor-like serine/threonine-protein kinase At1g12460 from Arabidopsis thaliana (Mouse-ear cress).